The following is a 450-amino-acid chain: Protein tweety homolog 1 (450 aa).

The Extracellular segment spans residues methionine 1–alanine 43. A helical membrane pass occupies residues leucine 44–valine 64. The Cytoplasmic segment spans residues tyrosine 65–glycine 88. The chain crosses the membrane as a helical span at residues cysteine 89 to phenylalanine 109. Topologically, residues tyrosine 110–tryptophan 214 are extracellular. The N-linked (GlcNAc...) asparagine glycan is linked to asparagine 130. The chain crosses the membrane as a helical span at residues leucine 215–leucine 235. The Cytoplasmic portion of the chain corresponds to alanine 236–lysine 240. The helical transmembrane segment at tryptophan 241 to methionine 261 threads the bilayer. Residues glycine 262–glutamate 390 are Extracellular-facing. 2 disulfide bridges follow: cysteine 275–cysteine 385 and cysteine 303–cysteine 370. N-linked (GlcNAc...) asparagine glycans are attached at residues asparagine 284 and asparagine 355. The helical transmembrane segment at glycine 391 to cysteine 411 threads the bilayer. At serine 412 to isoleucine 450 the chain is on the cytoplasmic side. The interval glutamate 427 to isoleucine 450 is disordered. At serine 440 the chain carries Phosphoserine.

The protein belongs to the tweety family. In terms of assembly, homotetramer; disulfide-linked. Homodimer. In terms of processing, N-glycosylated. Contains high-mannose, hybrid and complex oligosaccharides.

It is found in the cell membrane. The catalysed reaction is chloride(in) = chloride(out). The enzyme catalyses L-glutamate(out) = L-glutamate(in). In terms of biological role, calcium-independent, swelling-dependent volume-regulated anion channel (VRAC-swell) which plays a pivotal role in the process of regulatory volume decrease (RVD) in the brain through the efflux of anions like chloride and organic osmolytes like glutamate. The sequence is that of Protein tweety homolog 1 (TTYH1) from Bos taurus (Bovine).